The primary structure comprises 96 residues: Salivary protein FS50 (96 aa).

Residues 1–19 form the signal peptide; the sequence is MKWILVLALVCLAVEYSYS. 4 disulfide bridges follow: cysteine 26–cysteine 71, cysteine 50–cysteine 78, cysteine 63–cysteine 91, and cysteine 67–cysteine 93.

It is found in the secreted. In terms of biological role, salivary protein that inhibits host voltage-gated sodium channel Nav1.5/SCN5A. The sequence is that of Salivary protein FS50 from Xenopsylla cheopis (Oriental rat flea).